The primary structure comprises 72 residues: Brevinin-2SN3 (72 aa).

Residues 1–22 (MFTLKKPLLLLVFLGMISLSLC) form the signal peptide. Positions 23 to 40 (QDERGADEDDGGEMTEEE) are cleaved as a propeptide — removed in mature form. A disulfide bridge connects residues Cys-66 and Cys-72.

It belongs to the frog skin active peptide (FSAP) family. Brevinin subfamily. Expressed by the skin glands.

The protein resides in the secreted. In terms of biological role, antimicrobial peptide. Active against a variety of Gram-negative and Gram-positive bacterial strains. Active against fungus C.glabrata 090902 but not against C.albicans ATCC 10231. Shows hemolytic activity against human erythrocytes. This Sylvirana spinulosa (Fine-spined frog) protein is Brevinin-2SN3.